A 245-amino-acid polypeptide reads, in one-letter code: Adapter protein MecA (245 aa).

The protein belongs to the MecA family. In terms of assembly, homodimer.

Enables the recognition and targeting of unfolded and aggregated proteins to the ClpC protease or to other proteins involved in proteolysis. This chain is Adapter protein MecA, found in Streptococcus pneumoniae (strain ATCC BAA-255 / R6).